The following is a 160-amino-acid chain: Transcription elongation factor GreA (160 aa).

Positions 1-72 (MAEKTYVMTL…QIQILETKIR (72 aa)) form a coiled coil.

It belongs to the GreA/GreB family.

Functionally, necessary for efficient RNA polymerase transcription elongation past template-encoded arresting sites. The arresting sites in DNA have the property of trapping a certain fraction of elongating RNA polymerases that pass through, resulting in locked ternary complexes. Cleavage of the nascent transcript by cleavage factors such as GreA or GreB allows the resumption of elongation from the new 3'terminus. GreA releases sequences of 2 to 3 nucleotides. The polypeptide is Transcription elongation factor GreA (Streptococcus thermophilus (strain CNRZ 1066)).